The chain runs to 556 residues: 2-succinyl-5-enolpyruvyl-6-hydroxy-3-cyclohexene-1-carboxylate synthase (556 aa).

Belongs to the TPP enzyme family. MenD subfamily. Homodimer. Mg(2+) serves as cofactor. Mn(2+) is required as a cofactor. The cofactor is thiamine diphosphate.

The catalysed reaction is isochorismate + 2-oxoglutarate + H(+) = 5-enolpyruvoyl-6-hydroxy-2-succinyl-cyclohex-3-ene-1-carboxylate + CO2. It participates in quinol/quinone metabolism; 1,4-dihydroxy-2-naphthoate biosynthesis; 1,4-dihydroxy-2-naphthoate from chorismate: step 2/7. Its pathway is quinol/quinone metabolism; menaquinone biosynthesis. Catalyzes the thiamine diphosphate-dependent decarboxylation of 2-oxoglutarate and the subsequent addition of the resulting succinic semialdehyde-thiamine pyrophosphate anion to isochorismate to yield 2-succinyl-5-enolpyruvyl-6-hydroxy-3-cyclohexene-1-carboxylate (SEPHCHC). The polypeptide is 2-succinyl-5-enolpyruvyl-6-hydroxy-3-cyclohexene-1-carboxylate synthase (Escherichia coli O45:K1 (strain S88 / ExPEC)).